We begin with the raw amino-acid sequence, 636 residues long: Chaperone protein DnaK (636 aa).

Position 197 is a phosphothreonine; by autocatalysis (T197). A compositionally biased stretch (low complexity) spans 596–607; it reads LYQQAQEQQQSG. The tract at residues 596–636 is disordered; it reads LYQQAQEQQQSGSSGGSSDEDVVEDAEIVDEEDEEKRDDNR. Over residues 613–636 the composition is skewed to acidic residues; it reads SDEDVVEDAEIVDEEDEEKRDDNR.

The protein belongs to the heat shock protein 70 family.

Acts as a chaperone. This is Chaperone protein DnaK from Rubrobacter xylanophilus (strain DSM 9941 / JCM 11954 / NBRC 16129 / PRD-1).